The chain runs to 579 residues: Arginine--tRNA ligase (579 aa).

The 'HIGH' region motif lies at 136 to 146 (ANPTGPLHIGH).

Belongs to the class-I aminoacyl-tRNA synthetase family. Monomer.

The protein localises to the cytoplasm. It carries out the reaction tRNA(Arg) + L-arginine + ATP = L-arginyl-tRNA(Arg) + AMP + diphosphate. This Anaplasma marginale (strain St. Maries) protein is Arginine--tRNA ligase.